Reading from the N-terminus, the 1071-residue chain is Myosin IF heavy chain (1071 aa).

The Myosin motor domain maps to 40 to 736 (VGLTDMCFLE…TLFHFEELRQ (697 aa)). 134 to 141 (GESGSGKT) contributes to the ATP binding site. An actin-binding region spans residues 610-632 (INDLIGKLNTCQPHYIRCIKSNE). Residues 739-768 (LPSIVITIQRVWRGYKVRKWYKQELQRLRE) enclose the IQ domain. A TH1 domain is found at 870–1069 (SRKKEWDCRR…KGNTAIVYYN (200 aa)).

This sequence belongs to the TRAFAC class myosin-kinesin ATPase superfamily. Myosin family. Myosin I heavy chain is single-headed. Dimer of a heavy and a light chain. Inability to self-assemble into filaments.

In terms of biological role, myosin is a protein that binds to actin and has ATPase activity that is activated by actin. The sequence is that of Myosin IF heavy chain (myoF) from Dictyostelium discoideum (Social amoeba).